The following is an 81-amino-acid chain: Large ribosomal subunit protein bL31B (81 aa).

The protein belongs to the bacterial ribosomal protein bL31 family. Type B subfamily. As to quaternary structure, part of the 50S ribosomal subunit.

The polypeptide is Large ribosomal subunit protein bL31B (Limosilactobacillus reuteri (strain DSM 20016) (Lactobacillus reuteri)).